The primary structure comprises 463 residues: L-seryl-tRNA(Sec) selenium transferase (463 aa).

Lysine 295 is subject to N6-(pyridoxal phosphate)lysine.

This sequence belongs to the SelA family. In terms of assembly, homodecamer; pentamer of dimers. Binds only one seryl-tRNA(Sec) per dimer. Pyridoxal 5'-phosphate serves as cofactor.

It is found in the cytoplasm. It carries out the reaction L-seryl-tRNA(Sec) + selenophosphate + H(+) = L-selenocysteinyl-tRNA(Sec) + phosphate. The protein operates within aminoacyl-tRNA biosynthesis; selenocysteinyl-tRNA(Sec) biosynthesis; selenocysteinyl-tRNA(Sec) from L-seryl-tRNA(Sec) (bacterial route): step 1/1. In terms of biological role, converts seryl-tRNA(Sec) to selenocysteinyl-tRNA(Sec) required for selenoprotein biosynthesis. This is L-seryl-tRNA(Sec) selenium transferase from Shigella boydii serotype 4 (strain Sb227).